A 1042-amino-acid polypeptide reads, in one-letter code: Ribosome biogenesis protein NOC1 (1042 aa).

6 disordered regions span residues 1-20, 28-79, 101-128, 148-214, 546-567, and 897-1020; these read MGLKRAARQQRDIGKPAFDE, GKID…AAKD, LVADVDSGNEGGGGPSQPKISSEQSLDQ, NRED…IPQD, LNGDKRDGGTPRKKSNPSGSLT, and GKMT…LKTL. 2 stretches are compositionally biased toward basic and acidic residues: residues 9 to 18 and 63 to 79; these read QQRDIGKPAF and HPTEAEEHRDSHAAAKD. Positions 118–128 are enriched in polar residues; that stretch reads PKISSEQSLDQ. Acidic residues-rich tracts occupy residues 153-164 and 173-194; these read NTEDEASPDEDA and SDSDEGGGQEEMEKEDVDSFSD. Residues 195–207 show a composition bias toward basic and acidic residues; the sequence is NEEKVTEKVDSGE. Positions 902 to 911 are enriched in basic and acidic residues; it reads KRDETKREFG. Positions 937-957 are enriched in acidic residues; sequence NVDDDSDADLGDFDYSDDEED. A compositionally biased stretch (low complexity) spans 962–972; that stretch reads DGSMSDIGMDS. The span at 978–994 shows a compositional bias: acidic residues; sequence IFDDAGESDEQSSGEDE.

Belongs to the CBF/MAK21 family. In terms of assembly, interacts with NOC2. Forms a nucleolar complex with NOC2 that binds to 90S and 66S pre-ribosomes.

Its subcellular location is the nucleus. The protein resides in the nucleolus. Functionally, required for 60S ribosomal subunit synthesis. This is Ribosome biogenesis protein NOC1 (NOC1) from Chaetomium thermophilum (strain DSM 1495 / CBS 144.50 / IMI 039719) (Thermochaetoides thermophila).